We begin with the raw amino-acid sequence, 451 residues long: Cindoxin reductase (451 aa).

Residues A24, E45, L53, and V89 each contribute to the FAD site. NADP(+)-binding positions include 157-160 (NGNV) and 197-198 (RS). Residues W338 and 345-347 (GGI) each bind FAD. G345 contributes to the NADP(+) binding site.

The protein belongs to the ferredoxin--NADP reductase type 1 family. The cofactor is FAD.

In terms of biological role, involved in the degradation of cineol (eucalyptol). Catalyzes the reduction of cindoxin (CinC). This is Cindoxin reductase (cinB) from Citrobacter braakii.